Here is a 108-residue protein sequence, read N- to C-terminus: Universal stress protein Slr1101 (108 aa).

Belongs to the universal stress protein A family.

This Synechocystis sp. (strain ATCC 27184 / PCC 6803 / Kazusa) protein is Universal stress protein Slr1101.